We begin with the raw amino-acid sequence, 393 residues long: Dual specificity mitogen-activated protein kinase kinase 1 (393 aa).

Residues 1–26 (MPKKKPTPIQLNPTPDGSAVNGTSSA) form a disordered region. A compositionally biased stretch (polar residues) spans 9 to 26 (IQLNPTPDGSAVNGTSSA). Positions 68–361 (FEKISELGAG…LKQLLVHAFI (294 aa)) constitute a Protein kinase domain. ATP-binding positions include 74–82 (LGAGNGGVV) and lysine 97. The active-site Proton acceptor is the aspartate 190. Phosphoserine; by RAF is present on residues serine 218 and serine 222. Residues 270-307 (ELELLFGCQVEGDAAETPPRPRTPGRPLSSYGMDSRPP) are RAF1-binding. Position 286 is a phosphothreonine (threonine 286). Phosphothreonine; by MAPK1 is present on threonine 292. Serine 298 carries the post-translational modification Phosphoserine; by PAK.

It belongs to the protein kinase superfamily. STE Ser/Thr protein kinase family. MAP kinase kinase subfamily. As to quaternary structure, found in a complex with at least BRAF, HRAS, MAP2K1, MAPK3/ERK1 and RGS14. Forms a heterodimer with MAP2K2/MEK2. Forms heterodimers with KSR2 which further dimerize to form tetramers. Interacts with KSR1 or KSR2 and BRAF; the interaction with KSR1 or KSR2 mediates KSR1-BRAF or KSR2-BRAF dimerization. Interacts with ARBB2, LAMTOR3, MAPK1/ERK2 and RAF1. Interacts with MAPK1/ERK2. Interacts with MORG1. Interacts with PPARG. Interacts with isoform 1 of VRK2. Interacts with SGK1. Interacts with BIRC6/bruce. Interacts with KAT7; the interaction promotes KAT7 phosphorylation. Interacts with RAF1 and NEK10; the interaction is required for ERK1/2-signaling pathway activation in response to UV irradiation. Interacts with TRAF3IP3. Interacts with MOS. Phosphorylation at Ser-218 and Ser-222 by MAP kinase kinase kinases (BRAF or MEKK1) positively regulates the kinase activity. Also phosphorylated at Thr-292 by MAPK1/ERK2 and at Ser-298 by PAK. MAPK1/ERK2 phosphorylation of Thr-292 occurs in response to cellular adhesion and leads to inhibition of Ser-298 phosphorylation by PAK. Autophosphorylated at Ser-218 and Ser-222, autophosphosphorylation is promoted by NEK10 following UV irradiation.

It is found in the cytoplasm. Its subcellular location is the cytoskeleton. The protein resides in the microtubule organizing center. It localises to the centrosome. The protein localises to the spindle pole body. It is found in the nucleus. Its subcellular location is the membrane. It carries out the reaction L-seryl-[protein] + ATP = O-phospho-L-seryl-[protein] + ADP + H(+). The catalysed reaction is L-threonyl-[protein] + ATP = O-phospho-L-threonyl-[protein] + ADP + H(+). The enzyme catalyses L-tyrosyl-[protein] + ATP = O-phospho-L-tyrosyl-[protein] + ADP + H(+). With respect to regulation, ras proteins such as HRAS mediate the activation of RAF proteins such as RAF1 or BRAF which in turn activate extracellular signal-regulated kinases (ERK) through MAPK (mitogen-activated protein kinases) and ERK kinases MAP2K1/MEK1 and MAP2K2/MEK2. Activation occurs through phosphorylation of Ser-218 and Ser-222. MAP2K1/MEK1 binds KSR1 or KSR2 releasing the inhibitory intramolecular interaction between KSR1 or KSR2 protein kinase and N-terminal domains. This allows KSR1 or KSR2 dimerization with BRAF leading to BRAF activation and phosphorylation of MAP2K1. MAP2K1/MEK1 is also the target of negative feed-back regulation by its substrate kinases, such as MAPK1/ERK2. These phosphorylate MAP2K1/MEK1 on Thr-292, thereby facilitating dephosphorylation of the activating residues Ser-218 and Ser-222. Inhibited by serine/threonine phosphatase 2A. In terms of biological role, dual specificity protein kinase which acts as an essential component of the MAP kinase signal transduction pathway. Binding of extracellular ligands such as growth factors, cytokines and hormones to their cell-surface receptors activates RAS and this initiates RAF1 activation. RAF1 then further activates the dual-specificity protein kinases MAP2K1/MEK1 and MAP2K2/MEK2. Both MAP2K1/MEK1 and MAP2K2/MEK2 function specifically in the MAPK/ERK cascade, and catalyze the concomitant phosphorylation of a threonine and a tyrosine residue in a Thr-Glu-Tyr sequence located in the extracellular signal-regulated kinases MAPK3/ERK1 and MAPK1/ERK2, leading to their activation and further transduction of the signal within the MAPK/ERK cascade. Activates BRAF in a KSR1 or KSR2-dependent manner; by binding to KSR1 or KSR2 releases the inhibitory intramolecular interaction between KSR1 or KSR2 protein kinase and N-terminal domains which promotes KSR1 or KSR2-BRAF dimerization and BRAF activation. Depending on the cellular context, this pathway mediates diverse biological functions such as cell growth, adhesion, survival and differentiation, predominantly through the regulation of transcription, metabolism and cytoskeletal rearrangements. One target of the MAPK/ERK cascade is peroxisome proliferator-activated receptor gamma (PPARG), a nuclear receptor that promotes differentiation and apoptosis. MAP2K1/MEK1 has been shown to export PPARG from the nucleus. The MAPK/ERK cascade is also involved in the regulation of endosomal dynamics, including lysosome processing and endosome cycling through the perinuclear recycling compartment (PNRC), as well as in the fragmentation of the Golgi apparatus during mitosis. The protein is Dual specificity mitogen-activated protein kinase kinase 1 (MAP2K1) of Cricetulus griseus (Chinese hamster).